An 89-amino-acid polypeptide reads, in one-letter code: Co-chaperonin GroES (89 aa).

The protein belongs to the GroES chaperonin family. Heptamer of 7 subunits arranged in a ring. Interacts with the chaperonin GroEL.

It localises to the cytoplasm. In terms of biological role, together with the chaperonin GroEL, plays an essential role in assisting protein folding. The GroEL-GroES system forms a nano-cage that allows encapsulation of the non-native substrate proteins and provides a physical environment optimized to promote and accelerate protein folding. GroES binds to the apical surface of the GroEL ring, thereby capping the opening of the GroEL channel. This chain is Co-chaperonin GroES, found in Wolinella succinogenes (strain ATCC 29543 / DSM 1740 / CCUG 13145 / JCM 31913 / LMG 7466 / NCTC 11488 / FDC 602W) (Vibrio succinogenes).